The following is a 371-amino-acid chain: uncharacterized protein (371 aa).

The next 8 membrane-spanning stretches (helical) occupy residues 4-24 (LPML…FIYG), 60-82 (LIQL…ALYG), 87-109 (LWIV…MLSI), 130-150 (VFIN…FVAS), 197-217 (VVAV…LLPV), 224-244 (IYPL…YGLV), 282-302 (VPIW…GFHA), and 320-340 (FIFY…CMVG).

The protein belongs to the peptide transporter carbon starvation (CstA) (TC 2.A.114) family.

The protein resides in the cell membrane. This is an uncharacterized protein from Haemophilus influenzae (strain ATCC 51907 / DSM 11121 / KW20 / Rd).